The chain runs to 132 residues: Small ribosomal subunit protein uS11 (132 aa).

The segment covering 1-16 (MAAGMKGKRSRRRKER) has biased composition (basic residues). Residues 1 to 20 (MAAGMKGKRSRRRKERKNVE) are disordered.

This sequence belongs to the universal ribosomal protein uS11 family. Part of the 30S ribosomal subunit. Interacts with proteins S7 and S18. Binds to IF-3.

Functionally, located on the platform of the 30S subunit, it bridges several disparate RNA helices of the 16S rRNA. Forms part of the Shine-Dalgarno cleft in the 70S ribosome. The chain is Small ribosomal subunit protein uS11 from Clostridium botulinum (strain Hall / ATCC 3502 / NCTC 13319 / Type A).